The following is a 274-amino-acid chain: 2-dehydro-3-deoxyphosphooctonate aldolase (274 aa).

Belongs to the KdsA family.

It localises to the cytoplasm. The enzyme catalyses D-arabinose 5-phosphate + phosphoenolpyruvate + H2O = 3-deoxy-alpha-D-manno-2-octulosonate-8-phosphate + phosphate. The protein operates within carbohydrate biosynthesis; 3-deoxy-D-manno-octulosonate biosynthesis; 3-deoxy-D-manno-octulosonate from D-ribulose 5-phosphate: step 2/3. It participates in bacterial outer membrane biogenesis; lipopolysaccharide biosynthesis. The sequence is that of 2-dehydro-3-deoxyphosphooctonate aldolase from Legionella pneumophila (strain Lens).